A 211-amino-acid polypeptide reads, in one-letter code: Ribosomal RNA small subunit methyltransferase G (211 aa).

S-adenosyl-L-methionine contacts are provided by residues glycine 73, phenylalanine 78, 124–125 (VE), and arginine 137.

It belongs to the methyltransferase superfamily. RNA methyltransferase RsmG family.

The protein resides in the cytoplasm. Functionally, specifically methylates the N7 position of a guanine in 16S rRNA. The polypeptide is Ribosomal RNA small subunit methyltransferase G (Christiangramia forsetii (strain DSM 17595 / CGMCC 1.15422 / KT0803) (Gramella forsetii)).